Reading from the N-terminus, the 139-residue chain is D-ribose pyranase (139 aa).

H20 functions as the Proton donor in the catalytic mechanism. Residues D28, H106, and 128 to 130 (YAN) each bind substrate.

It belongs to the RbsD / FucU family. RbsD subfamily. As to quaternary structure, homodecamer.

It localises to the cytoplasm. The enzyme catalyses beta-D-ribopyranose = beta-D-ribofuranose. It functions in the pathway carbohydrate metabolism; D-ribose degradation; D-ribose 5-phosphate from beta-D-ribopyranose: step 1/2. Catalyzes the interconversion of beta-pyran and beta-furan forms of D-ribose. The sequence is that of D-ribose pyranase from Actinobacillus succinogenes (strain ATCC 55618 / DSM 22257 / CCUG 43843 / 130Z).